Reading from the N-terminus, the 631-residue chain is Phosphomethylpyrimidine synthase (631 aa).

Substrate-binding positions include asparagine 239, methionine 268, tyrosine 297, histidine 333, 353-355, 394-397, and glutamate 433; these read SRG and DGLR. Position 437 (histidine 437) interacts with Zn(2+). Tyrosine 460 provides a ligand contact to substrate. Histidine 501 provides a ligand contact to Zn(2+). [4Fe-4S] cluster-binding residues include cysteine 581, cysteine 584, and cysteine 589.

The protein belongs to the ThiC family. In terms of assembly, homodimer. It depends on [4Fe-4S] cluster as a cofactor.

The enzyme catalyses 5-amino-1-(5-phospho-beta-D-ribosyl)imidazole + S-adenosyl-L-methionine = 4-amino-2-methyl-5-(phosphooxymethyl)pyrimidine + CO + 5'-deoxyadenosine + formate + L-methionine + 3 H(+). The protein operates within cofactor biosynthesis; thiamine diphosphate biosynthesis. Functionally, catalyzes the synthesis of the hydroxymethylpyrimidine phosphate (HMP-P) moiety of thiamine from aminoimidazole ribotide (AIR) in a radical S-adenosyl-L-methionine (SAM)-dependent reaction. The sequence is that of Phosphomethylpyrimidine synthase from Ralstonia nicotianae (strain ATCC BAA-1114 / GMI1000) (Ralstonia solanacearum).